The following is a 292-amino-acid chain: MTIVVGYLAGKVGPSALHLAVRVARMHKTSLTVATIVRRHWPTPSLARVDAEYELWSEQLAAASAREAQRYLRRLADGIEVSYHHRAHRSVSAGLLDVVEELEAEVLVLGSFPSGRRARVLIGSTADRLLHSSPVPVAITPRRYRCYTDRLTRLSCGYSATSGSVDVVRRCGHLASRYGVPMRVITFAVRGRTMYPPEVGLHAEASVLEAWAAQARELLEKLRINGVVSEDVVLQVVTGNGWAQALDAADWQDGEILALGTSPFGDVARVFLGSWSGKIIRYSPVPVLVLPG.

It belongs to the universal stress protein A family.

The chain is Universal stress protein Mb2346c from Mycobacterium bovis (strain ATCC BAA-935 / AF2122/97).